The chain runs to 307 residues: 4-hydroxy-3-methylbut-2-enyl diphosphate reductase (307 aa).

Cysteine 12 is a [4Fe-4S] cluster binding site. (2E)-4-hydroxy-3-methylbut-2-enyl diphosphate is bound by residues histidine 41 and histidine 74. Dimethylallyl diphosphate-binding residues include histidine 41 and histidine 74. Positions 41 and 74 each coordinate isopentenyl diphosphate. Cysteine 96 is a [4Fe-4S] cluster binding site. Residue histidine 124 coordinates (2E)-4-hydroxy-3-methylbut-2-enyl diphosphate. Histidine 124 provides a ligand contact to dimethylallyl diphosphate. Histidine 124 is an isopentenyl diphosphate binding site. Glutamate 126 functions as the Proton donor in the catalytic mechanism. Threonine 165 is a binding site for (2E)-4-hydroxy-3-methylbut-2-enyl diphosphate. Cysteine 195 is a [4Fe-4S] cluster binding site. Positions 223, 224, 225, and 267 each coordinate (2E)-4-hydroxy-3-methylbut-2-enyl diphosphate. The dimethylallyl diphosphate site is built by serine 223, serine 224, asparagine 225, and serine 267. The isopentenyl diphosphate site is built by serine 223, serine 224, asparagine 225, and serine 267.

Belongs to the IspH family. [4Fe-4S] cluster is required as a cofactor.

It carries out the reaction isopentenyl diphosphate + 2 oxidized [2Fe-2S]-[ferredoxin] + H2O = (2E)-4-hydroxy-3-methylbut-2-enyl diphosphate + 2 reduced [2Fe-2S]-[ferredoxin] + 2 H(+). The catalysed reaction is dimethylallyl diphosphate + 2 oxidized [2Fe-2S]-[ferredoxin] + H2O = (2E)-4-hydroxy-3-methylbut-2-enyl diphosphate + 2 reduced [2Fe-2S]-[ferredoxin] + 2 H(+). It functions in the pathway isoprenoid biosynthesis; dimethylallyl diphosphate biosynthesis; dimethylallyl diphosphate from (2E)-4-hydroxy-3-methylbutenyl diphosphate: step 1/1. The protein operates within isoprenoid biosynthesis; isopentenyl diphosphate biosynthesis via DXP pathway; isopentenyl diphosphate from 1-deoxy-D-xylulose 5-phosphate: step 6/6. Functionally, catalyzes the conversion of 1-hydroxy-2-methyl-2-(E)-butenyl 4-diphosphate (HMBPP) into a mixture of isopentenyl diphosphate (IPP) and dimethylallyl diphosphate (DMAPP). Acts in the terminal step of the DOXP/MEP pathway for isoprenoid precursor biosynthesis. The sequence is that of 4-hydroxy-3-methylbut-2-enyl diphosphate reductase from Magnetococcus marinus (strain ATCC BAA-1437 / JCM 17883 / MC-1).